A 117-amino-acid chain; its full sequence is Small ribosomal subunit protein bS6 (117 aa).

It belongs to the bacterial ribosomal protein bS6 family.

In terms of biological role, binds together with bS18 to 16S ribosomal RNA. This Porphyromonas gingivalis (strain ATCC BAA-308 / W83) protein is Small ribosomal subunit protein bS6.